Consider the following 91-residue polypeptide: Small ribosomal subunit protein uS19 (91 aa).

The protein belongs to the universal ribosomal protein uS19 family.

Its function is as follows. Protein S19 forms a complex with S13 that binds strongly to the 16S ribosomal RNA. The sequence is that of Small ribosomal subunit protein uS19 from Paraburkholderia phymatum (strain DSM 17167 / CIP 108236 / LMG 21445 / STM815) (Burkholderia phymatum).